We begin with the raw amino-acid sequence, 487 residues long: L-tartrate/succinate antiporter (487 aa).

The next 14 membrane-spanning stretches (helical) occupy residues 10-30 (YLAPLAVIAIIALIPVPAGLE), 33-53 (TWLYFAVFTGVIVGLILEPVP), 54-74 (GAVVAMVGISIIAILSPWLLF), 93-113 (WAVSGFSNSVIWLIFAAFMFG), 137-157 (TLFLGYAVMFSELILAPVTPS), 189-209 (IGSYIMWIGIVADCVTSAIFL), 230-250 (LSWGDWFLGMLPLSILLVLLV), 292-312 (LMVGALVLWIFGGDYIDAAMV), 313-333 (GYSVVALMLLLRIISWDDIVS), 340-360 (VFFWLASLITLATGLNNTGFI), 370-390 (SLSGYSPTMVMVALIVVFYLL), 393-413 (FFASATAYTSALAPMMIAAAL), 418-438 (IPLPVFCLMVGAAIGLGSILT), and 465-485 (IFGLIFLVLLVITGLLWMPVV).

Belongs to the SLC13A/DASS transporter (TC 2.A.47) family. DIT1 subfamily.

The protein resides in the cell inner membrane. It carries out the reaction (2R,3R)-tartrate(out) + succinate(in) = (2R,3R)-tartrate(in) + succinate(out). Functionally, catalyzes the uptake of tartrate in exchange for intracellular succinate. Essential for anaerobic L-tartrate fermentation. In Shigella dysenteriae serotype 1 (strain Sd197), this protein is L-tartrate/succinate antiporter (ttdT).